The chain runs to 1076 residues: DNA-directed RNA polymerase subunit beta (1076 aa).

It belongs to the RNA polymerase beta chain family. In plastids the minimal PEP RNA polymerase catalytic core is composed of four subunits: alpha, beta, beta', and beta''. When a (nuclear-encoded) sigma factor is associated with the core the holoenzyme is formed, which can initiate transcription.

The protein localises to the plastid. It carries out the reaction RNA(n) + a ribonucleoside 5'-triphosphate = RNA(n+1) + diphosphate. Functionally, DNA-dependent RNA polymerase catalyzes the transcription of DNA into RNA using the four ribonucleoside triphosphates as substrates. The chain is DNA-directed RNA polymerase subunit beta from Euglena longa (Euglenophycean alga).